We begin with the raw amino-acid sequence, 263 residues long: Acyl-[acyl-carrier-protein]--UDP-N-acetylglucosamine O-acyltransferase (263 aa).

The protein belongs to the transferase hexapeptide repeat family. LpxA subfamily. In terms of assembly, homotrimer.

The protein localises to the cytoplasm. It carries out the reaction a (3R)-hydroxyacyl-[ACP] + UDP-N-acetyl-alpha-D-glucosamine = a UDP-3-O-[(3R)-3-hydroxyacyl]-N-acetyl-alpha-D-glucosamine + holo-[ACP]. It functions in the pathway glycolipid biosynthesis; lipid IV(A) biosynthesis; lipid IV(A) from (3R)-3-hydroxytetradecanoyl-[acyl-carrier-protein] and UDP-N-acetyl-alpha-D-glucosamine: step 1/6. Involved in the biosynthesis of lipid A, a phosphorylated glycolipid that anchors the lipopolysaccharide to the outer membrane of the cell. This Tolumonas auensis (strain DSM 9187 / NBRC 110442 / TA 4) protein is Acyl-[acyl-carrier-protein]--UDP-N-acetylglucosamine O-acyltransferase.